The primary structure comprises 166 residues: ATP synthase subunit b (166 aa).

The helical transmembrane segment at 7–27 threads the bilayer; that stretch reads QFSLGLFILQIILFVGLILLL.

It belongs to the ATPase B chain family. In terms of assembly, F-type ATPases have 2 components, F(1) - the catalytic core - and F(0) - the membrane proton channel. F(1) has five subunits: alpha(3), beta(3), gamma(1), delta(1), epsilon(1). F(0) has three main subunits: a(1), b(2) and c(10-14). The alpha and beta chains form an alternating ring which encloses part of the gamma chain. F(1) is attached to F(0) by a central stalk formed by the gamma and epsilon chains, while a peripheral stalk is formed by the delta and b chains.

Its subcellular location is the cell inner membrane. In terms of biological role, f(1)F(0) ATP synthase produces ATP from ADP in the presence of a proton or sodium gradient. F-type ATPases consist of two structural domains, F(1) containing the extramembraneous catalytic core and F(0) containing the membrane proton channel, linked together by a central stalk and a peripheral stalk. During catalysis, ATP synthesis in the catalytic domain of F(1) is coupled via a rotary mechanism of the central stalk subunits to proton translocation. Component of the F(0) channel, it forms part of the peripheral stalk, linking F(1) to F(0). This is ATP synthase subunit b from Flavobacterium psychrophilum (strain ATCC 49511 / DSM 21280 / CIP 103535 / JIP02/86).